Consider the following 224-residue polypeptide: Octanoyltransferase (224 aa).

Residues A38 to S213 form the BPL/LPL catalytic domain. Substrate contacts are provided by residues R77–H84, S144–G146, and G157–A159. Residue C175 is the Acyl-thioester intermediate of the active site.

It belongs to the LipB family.

It is found in the cytoplasm. The catalysed reaction is octanoyl-[ACP] + L-lysyl-[protein] = N(6)-octanoyl-L-lysyl-[protein] + holo-[ACP] + H(+). It functions in the pathway protein modification; protein lipoylation via endogenous pathway; protein N(6)-(lipoyl)lysine from octanoyl-[acyl-carrier-protein]: step 1/2. Functionally, catalyzes the transfer of endogenously produced octanoic acid from octanoyl-acyl-carrier-protein onto the lipoyl domains of lipoate-dependent enzymes. Lipoyl-ACP can also act as a substrate although octanoyl-ACP is likely to be the physiological substrate. This is Octanoyltransferase from Hahella chejuensis (strain KCTC 2396).